Reading from the N-terminus, the 146-residue chain is Snaclec rhodocytin subunit beta (146 aa).

The signal sequence occupies residues 1–23 (MGRFIFVSFGLLVVFLSLSGTGA). Intrachain disulfides connect Cys-25–Cys-36, Cys-53–Cys-142, and Cys-119–Cys-134. The 112-residue stretch at 32-143 (YEGHCYKPFN…CSSTCSFVCK (112 aa)) folds into the C-type lectin domain.

This sequence belongs to the snaclec family. In terms of assembly, dimer (non-covalently linked) of heterodimers of subunits alpha and beta (disulfide-linked). As to expression, expressed by the venom gland.

The protein localises to the secreted. In terms of biological role, elicits platelet aggregation by the binding to the C-type lectin domain family 1 member B (CLEC1B/CLEC2). Binding leads to tyrosine phosphorylation in the cytoplasmic tail of CLEC1B, which promotes the binding of spleen tyrosine kinase (Syk), subsequent activation of PLCgamma2, and platelet activation and aggregation. Binding to GPIbalpha (GP1BA) and alpha2/beta-1 (ITGA2/ITGB1) may also induce aggregation, but this is controversial. This is Snaclec rhodocytin subunit beta from Calloselasma rhodostoma (Malayan pit viper).